The sequence spans 277 residues: 5'-nucleotidase SurE (277 aa).

4 residues coordinate a divalent metal cation: aspartate 16, aspartate 17, serine 48, and asparagine 101.

Belongs to the SurE nucleotidase family. Requires a divalent metal cation as cofactor.

It is found in the cytoplasm. The catalysed reaction is a ribonucleoside 5'-phosphate + H2O = a ribonucleoside + phosphate. Nucleotidase that shows phosphatase activity on nucleoside 5'-monophosphates. In Parvibaculum lavamentivorans (strain DS-1 / DSM 13023 / NCIMB 13966), this protein is 5'-nucleotidase SurE.